The chain runs to 393 residues: Dual specificity mitogen-activated protein kinase kinase 1 (393 aa).

Residues 1 to 27 (MPKKKPTPIQLNPAPDGSAVNGTSSAE) form a disordered region. The 294-residue stretch at 68-361 (FEKISELGAG…LKQLMVHAFI (294 aa)) folds into the Protein kinase domain. ATP contacts are provided by residues 74-82 (LGAGNGGVV) and lysine 97. Aspartate 190 serves as the catalytic Proton acceptor. Residues serine 218 and serine 222 each carry the phosphoserine; by RAF modification. Residues 270–307 (ELELLFGCQVEGDAAETPPRPRTPGRPLSSYGMDSRPP) are RAF1-binding. Phosphothreonine is present on threonine 286. Threonine 292 carries the post-translational modification Phosphothreonine; by MAPK1. Serine 298 carries the post-translational modification Phosphoserine; by PAK.

This sequence belongs to the protein kinase superfamily. STE Ser/Thr protein kinase family. MAP kinase kinase subfamily. Found in a complex with at least BRAF, HRAS, MAP2K1, MAPK3/ERK1 and RGS14. Forms a heterodimer with MAP2K2/MEK2. Forms heterodimers with KSR2 which further dimerize to form tetramers. Interacts with KSR1 or KSR2 and BRAF; the interaction with KSR1 or KSR2 mediates KSR1-BRAF or KSR2-BRAF dimerization. Interacts with ARBB2, LAMTOR3, MAPK1/ERK2 and RAF1. Interacts with MAPK1/ERK2. Interacts with MORG1. Interacts with PPARG. Interacts with VRK2. Interacts with SGK1. Interacts with BIRC6/bruce. Interacts with KAT7; the interaction promotes KAT7 phosphorylation. Interacts with RAF1 and NEK10; the interaction is required for ERK1/2-signaling pathway activation in response to UV irradiation. Interacts with TRAF3IP3. Interacts with MOS. Phosphorylation at Ser-218 and Ser-222 by MAP kinase kinase kinases (BRAF or MEKK1) positively regulates kinase activity. Also phosphorylated at Thr-292 by MAPK1/ERK2 and at Ser-298 by PAK. MAPK1/ERK2 phosphorylation of Thr-292 occurs in response to cellular adhesion and leads to inhibition of Ser-298 phosphorylation by PAK. Autophosphorylated at Ser-218 and Ser-222, autophosphosphorylation is promoted by NEK10 following UV irradiation.

Its subcellular location is the cytoplasm. It localises to the cytoskeleton. The protein resides in the microtubule organizing center. It is found in the centrosome. The protein localises to the spindle pole body. Its subcellular location is the nucleus. It localises to the membrane. The enzyme catalyses L-seryl-[protein] + ATP = O-phospho-L-seryl-[protein] + ADP + H(+). It catalyses the reaction L-threonyl-[protein] + ATP = O-phospho-L-threonyl-[protein] + ADP + H(+). The catalysed reaction is L-tyrosyl-[protein] + ATP = O-phospho-L-tyrosyl-[protein] + ADP + H(+). Ras proteins such as HRAS mediate the activation of RAF proteins such as RAF1 or BRAF which in turn activate extracellular signal-regulated kinases (ERK) through MAPK (mitogen-activated protein kinases) and ERK kinases MAP2K1/MEK1 and MAP2K2/MEK2. Activation occurs through phosphorylation of Ser-218 and Ser-222. MAP2K1/MEK1 binds KSR1 or KSR2 releasing the inhibitory intramolecular interaction between KSR1 or KSR2 protein kinase and N-terminal domains. This allows KSR1 or KSR2 dimerization with BRAF leading to BRAF activation and phosphorylation of MAP2K1. MAP2K1/MEK1 is also the target of negative feed-back regulation by its substrate kinases, such as MAPK1/ERK2. These phosphorylate MAP2K1/MEK1 on Thr-292, thereby facilitating dephosphorylation of the activating residues Ser-218 and Ser-222. Inhibited by serine/threonine phosphatase 2A. Its function is as follows. Dual specificity protein kinase which acts as an essential component of the MAP kinase signal transduction pathway. Binding of extracellular ligands such as growth factors, cytokines and hormones to their cell-surface receptors activates RAS and this initiates RAF1 activation. RAF1 then further activates the dual-specificity protein kinases MAP2K1/MEK1 and MAP2K2/MEK2. Both MAP2K1/MEK1 and MAP2K2/MEK2 function specifically in the MAPK/ERK cascade, and catalyze the concomitant phosphorylation of a threonine and a tyrosine residue in a Thr-Glu-Tyr sequence located in the extracellular signal-regulated kinases MAPK3/ERK1 and MAPK1/ERK2, leading to their activation and further transduction of the signal within the MAPK/ERK cascade. Activates BRAF in a KSR1 or KSR2-dependent manner; by binding to KSR1 or KSR2 releases the inhibitory intramolecular interaction between KSR1 or KSR2 protein kinase and N-terminal domains which promotes KSR1 or KSR2-BRAF dimerization and BRAF activation. Depending on the cellular context, this pathway mediates diverse biological functions such as cell growth, adhesion, survival and differentiation, predominantly through the regulation of transcription, metabolism and cytoskeletal rearrangements. One target of the MAPK/ERK cascade is peroxisome proliferator-activated receptor gamma (PPARG), a nuclear receptor that promotes differentiation and apoptosis. MAP2K1/MEK1 has been shown to export PPARG from the nucleus. The MAPK/ERK cascade is also involved in the regulation of endosomal dynamics, including lysosome processing and endosome cycling through the perinuclear recycling compartment (PNRC), as well as in the fragmentation of the Golgi apparatus during mitosis. The polypeptide is Dual specificity mitogen-activated protein kinase kinase 1 (Rattus norvegicus (Rat)).